The chain runs to 353 residues: MSRFWTDKIASLDPYVPGEQPQDKKYIKLNTNESPYSPSPKAIEAMALEVSERLRLYPDPNCATLKNALAKSYQLDANQVFVGNGSDEVLALAFMGYFAGGKPLAFADITYSFYKVYAGLYSIEPKLIPLNDDFDIIPADYENLDVSGVVITNPNAPTGKALPLADIEAILKANPDVVVLVDEAYVDFGAQSAVSLINQYPNLLVVQTLSKSRALAGIRVGYALGHADLIEGLERLKNSFNSYPIDRVALVGATAAVEDEAYLKEICDKTIATREQSVKDLEALGFSIIPSATNFVFATHPEKNAEQIYLTLKERGILVRFFGSNKPRIGNYLRITIGTDEEMAALTAALKTL.

Position 211 is an N6-(pyridoxal phosphate)lysine (K211).

It belongs to the class-II pyridoxal-phosphate-dependent aminotransferase family. Histidinol-phosphate aminotransferase subfamily. Homodimer. Pyridoxal 5'-phosphate serves as cofactor.

The catalysed reaction is L-histidinol phosphate + 2-oxoglutarate = 3-(imidazol-4-yl)-2-oxopropyl phosphate + L-glutamate. It functions in the pathway amino-acid biosynthesis; L-histidine biosynthesis; L-histidine from 5-phospho-alpha-D-ribose 1-diphosphate: step 7/9. The sequence is that of Histidinol-phosphate aminotransferase from Marinomonas sp. (strain MWYL1).